The sequence spans 523 residues: Nuclear receptor ROR-alpha (523 aa).

Residues 1–26 (MESAPAAPDPAASEPGSSGADAAAGS) show a composition bias toward low complexity. Positions 1 to 63 (MESAPAAPDP…SRGISVTKKT (63 aa)) are disordered. K38 is modified (N6-methyllysine). Over residues 48–57 (QSYSSTSRGI) the composition is skewed to polar residues. NR C4-type zinc fingers lie at residues 73–93 (CKIC…CEGC) and 109–133 (CPRQ…LQKC). The segment at residues 73–138 (CKICGDKSSG…RLQKCLAVGM (66 aa)) is a DNA-binding region (nuclear receptor). The disordered stretch occupies residues 154–183 (DSLYAEVQKHRMQQQQRDHQQQPGEAEPLT). T183 is modified (phosphothreonine; by MAPK1). K240 is covalently cross-linked (Glycyl lysine isopeptide (Lys-Gly) (interchain with G-Cter in SUMO)). One can recognise an NR LBD domain in the interval 272 to 510 (ELEHLAQNIS…LHFPPLYKEL (239 aa)). The short motif at 506–523 (LYKELFTSEFEPAMQIDG) is the AF-2 element.

It belongs to the nuclear hormone receptor family. NR1 subfamily. In terms of assembly, monomer. Interacts (via the DNA-binding domain) with HIF1A; the interaction enhances HIF1A transcription under hypoxia through increasing protein stability. Interacts with CEBPB; the interaction disrupts the interaction CEBPB:EP300. Interacts with the coactivators NCOA2, PPARGC1A (via LXXLL motif), EP300 and MED1. Interacts with the corepressor NCOR1. Interacts with MAGED1 and CTNNB1. Interacts with CRY1 and PER2. Interacts (via AF-2 motif) with PROX1. Interacts with NRIP1. Isoform 4 interacts (via AF-2 motif) with isoform 1 of FOXP3 (via LXXLL motif). In terms of processing, phosphorylation by conventional PKCs in neurons inhibits transcriptional activity. Phosphorylated on Thr-183 by MAPK1/ERK1 in vitro. Sumoylated by SENP1 and SENP2. Sumoylation, promoted by PIAS2, PIAS3, PIAS4 but not PIAS1, enhances the transcriptional activity. Desumoylated by SENP1. Post-translationally, ubiquitinated, leading to its degradation by the proteasome. Proteasomal degradation is required for efficient transcriptional activity and is prevented by HR. In terms of processing, monomethylated at Lys-38 by EZH2, this creates a degron recognized by a DCX (DDB1-DCAF1/VPRBP-CUL4A-RBX1) E3 ubiquitin ligase complex. As to expression, widely expressed in a number of tissues. Expressed in both regulatory T-cells (Treg) and effector T-cells (Teff). Isoform 4: Highly expressed in the central nervous system, including in the cerebellum.

Its subcellular location is the nucleus. Its function is as follows. Nuclear receptor that binds DNA as a monomer to ROR response elements (RORE) containing a single core motif half-site 5'-AGGTCA-3' preceded by a short A-T-rich sequence. Key regulator of embryonic development, cellular differentiation, immunity, circadian rhythm as well as lipid, steroid, xenobiotics and glucose metabolism. Considered to have intrinsic transcriptional activity, have some natural ligands like oxysterols that act as agonists (25-hydroxycholesterol) or inverse agonists (7-oxygenated sterols), enhancing or repressing the transcriptional activity, respectively. Recruits distinct combinations of cofactors to target genes regulatory regions to modulate their transcriptional expression, depending on the tissue, time and promoter contexts. Regulates genes involved in photoreceptor development including OPN1SW, OPN1SM and ARR3 and skeletal muscle development with MYOD1. Required for proper cerebellum development. Regulates SHH gene expression, among others, to induce granule cells proliferation as well as expression of genes involved in calcium-mediated signal transduction. Regulates the circadian expression of several clock genes, including CLOCK, BMAL1, NPAS2 and CRY1. Competes with NR1D1 for binding to their shared DNA response element on some clock genes such as BMAL1, CRY1 and NR1D1 itself, resulting in NR1D1-mediated repression or RORA-mediated activation of clock genes expression, leading to the circadian pattern of clock genes expression. Therefore influences the period length and stability of the clock. Regulates genes involved in lipid metabolism such as apolipoproteins APOA1, APOA5, APOC3 and PPARG. In liver, has specific and redundant functions with RORC as positive or negative modulator of expression of genes encoding phase I and phase II proteins involved in the metabolism of lipids, steroids and xenobiotics, such as CYP7B1 and SULT2A1. Induces a rhythmic expression of some of these genes. In addition, interplays functionally with NR1H2 and NR1H3 for the regulation of genes involved in cholesterol metabolism. Also involved in the regulation of hepatic glucose metabolism through the modulation of G6PC1 and PCK1. In adipose tissue, plays a role as negative regulator of adipocyte differentiation, probably acting through dual mechanisms. May suppress CEBPB-dependent adipogenesis through direct interaction and PPARG-dependent adipogenesis through competition for DNA-binding. Downstream of IL6 and TGFB and synergistically with RORC isoform 2, is implicated in the lineage specification of uncommitted CD4(+) T-helper (T(H)) cells into T(H)17 cells, antagonizing the T(H)1 program. Probably regulates IL17 and IL17F expression on T(H) by binding to the essential enhancer conserved non-coding sequence 2 (CNS2) in the IL17-IL17F locus. Involved in hypoxia signaling by interacting with and activating the transcriptional activity of HIF1A. May inhibit cell growth in response to cellular stress. May exert an anti-inflammatory role by inducing CHUK expression and inhibiting NF-kappa-B signaling. In Homo sapiens (Human), this protein is Nuclear receptor ROR-alpha (RORA).